The primary structure comprises 709 residues: Eukaryotic translation initiation factor 3 subunit B (709 aa).

The tract at residues 1 to 98 (MSINEEEYLR…LFIQYKNVAD (98 aa)) is sufficient for interaction with HCR1 and TIF32. Residues 1–221 (MSINEEEYLR…GIQAWGGADF (221 aa)) form a sufficient for interaction with PIC8 region. Residues 37–124 (NYVIVDGAPI…HRLLVNRLSD (88 aa)) enclose the RRM domain.

It belongs to the eIF-3 subunit B family. In terms of assembly, component of the eukaryotic translation initiation factor 3 (eIF-3) complex.

The protein localises to the cytoplasm. In terms of biological role, RNA-binding component of the eukaryotic translation initiation factor 3 (eIF-3) complex, which is involved in protein synthesis of a specialized repertoire of mRNAs and, together with other initiation factors, stimulates binding of mRNA and methionyl-tRNAi to the 40S ribosome. The eIF-3 complex specifically targets and initiates translation of a subset of mRNAs involved in cell proliferation. This is Eukaryotic translation initiation factor 3 subunit B from Lodderomyces elongisporus (strain ATCC 11503 / CBS 2605 / JCM 1781 / NBRC 1676 / NRRL YB-4239) (Yeast).